Reading from the N-terminus, the 823-residue chain is DNA mismatch repair protein MutS (823 aa).

605 to 612 contacts ATP; that stretch reads GPNMSGKS.

The protein belongs to the DNA mismatch repair MutS family.

In terms of biological role, this protein is involved in the repair of mismatches in DNA. It is possible that it carries out the mismatch recognition step. This protein has a weak ATPase activity. The chain is DNA mismatch repair protein MutS from Fervidobacterium nodosum (strain ATCC 35602 / DSM 5306 / Rt17-B1).